The following is a 339-amino-acid chain: Probable G-protein coupled receptor 33 (339 aa).

The Extracellular segment spans residues 1-30 (MDLINSSTHVINVSTSLTNSTGVPTPAPKT). Residues Asn-5, Asn-12, and Asn-19 are each glycosylated (N-linked (GlcNAc...) asparagine). Residues 31–53 (IIAASLFMAFIIGVISNGLYLWM) traverse the membrane as a helical segment. Residues 54-64 (LQFKMQRTVNT) are Cytoplasmic-facing. The chain crosses the membrane as a helical span at residues 65–86 (LLFFHLILSYFISTLILPFMAT). The Extracellular portion of the chain corresponds to 87 to 103 (SFLQDNHWVFGSVLCKA). Cys-101 and Cys-179 are joined by a disulfide. The chain crosses the membrane as a helical span at residues 104-124 (FNSTLSVSMFASVFFLSAISV). Residues 125–143 (ARYYLILHPVWSQQHRTPH) are Cytoplasmic-facing. Residues 144–165 (WASRIALQIWISATILSIPYLV) traverse the membrane as a helical segment. Topologically, residues 166–209 (FRTTHDDHKGRIKCQNNYIVSTDWESKEHQTLGQWIHAACFVGR) are extracellular. The helical transmembrane segment at 210 to 230 (FLLGFLLPFLVIIFCYKRVAT) threads the bilayer. Residues 231 to 246 (KMKEKGLFKSSKPFKV) are Cytoplasmic-facing. Residues 247–268 (MVTAVISFFVCWMPYHVHSGLV) form a helical membrane-spanning segment. At 269–283 (LTKSQPLPLHLTLGL) the chain is on the extracellular side. A helical transmembrane segment spans residues 284-303 (AVVTISFNTVVSPVLYLFTG). The Cytoplasmic portion of the chain corresponds to 304–339 (ENFKVFKKSILALFNSTFSDISSTERTQTLNSETEI).

Belongs to the G-protein coupled receptor 1 family. Expressed predominantly in lung, spleen and testis.

It is found in the cell membrane. Orphan receptor; could be a chemoattractant receptor. The sequence is that of Probable G-protein coupled receptor 33 (Gpr33) from Mus musculus (Mouse).